The primary structure comprises 581 residues: Tetratricopeptide repeat and J domain-containing co-chaperone DNJ1 (581 aa).

A signal peptide spans 1 to 19 (MKATLLPSLLALSLTLCLA). TPR repeat units lie at residues 48–81 (ASQH…DPSS), 82–115 (WLTY…NPKF), 116–149 (DKAY…RAEK), 221–254 (LETR…TPSP), 257–293 (LRRL…DPDN), 378–411 (LELH…DPDN), and 412–445 (VEAT…SGRT). N-linked (GlcNAc...) asparagine glycosylation occurs at asparagine 293. The region spanning 467–528 (DYYKVLGVKR…ELRKKYDQGD (62 aa)) is the J domain. The disordered stretch occupies residues 522–544 (KKYDQGDDPNDPMGGQQGGYGNP).

Interacts with the ER chaperone BIP1.

It localises to the endoplasmic reticulum lumen. In terms of biological role, endoplasmic reticulum (ER) protein that functions as a co-chaperone for BIP1 during ER stress. Might be specifically involved in the refolding of N-glycosylated proteins. The polypeptide is Tetratricopeptide repeat and J domain-containing co-chaperone DNJ1 (Mycosarcoma maydis (Corn smut fungus)).